The following is a 316-amino-acid chain: Pleckstrin homology domain-containing family F member 1 homolog (316 aa).

A PH domain is found at 35-131 (VLVGEGVLTK…WMAHINKCVE (97 aa)). The FYVE-type zinc-finger motif lies at 152–212 (DTDASVCMHC…VCDACYERLK (61 aa)). 8 residues coordinate Zn(2+): cysteine 158, cysteine 161, cysteine 175, cysteine 178, cysteine 183, cysteine 186, cysteine 204, and cysteine 207. A disordered region spans residues 215–316 (PSSLGSGEDS…AAVATTGSHC (102 aa)). Positions 244 to 253 (SNDEDSDEET) are enriched in acidic residues. The segment covering 279 to 292 (SSTITSPSSATTGS) has biased composition (low complexity). Polar residues predominate over residues 298–316 (VTPSVQSSPAAVATTGSHC).

Interacts with Gdi (Rab GDP dissociation inhibitor). As to expression, in ovaries, expressed both in the germ line cells and in the overlying somatic follicular epithelium.

It is found in the apical cell membrane. Its subcellular location is the endosome membrane. The protein localises to the cytoplasm. It localises to the cell cortex. Its function is as follows. Functions in the regulation of endosome morphology and late endosome formation. Has a role in controlling trafficking from early to late endosomes and from late endosomes to lysosomes. Important for localization of Gdi to the endosomal membranes. May function in controlling the activity of multiple regulators in the endocytic pathway, perhaps by positively controlling those involved in the early steps of endocytosis such as Rab5 and hrs, and negative regulating those involved in the late stages of endocytosis like car and VhaSFD. This chain is Pleckstrin homology domain-containing family F member 1 homolog, found in Drosophila melanogaster (Fruit fly).